The sequence spans 286 residues: Elongation factor Ts (286 aa).

The tract at residues 82-85 (TDFV) is involved in Mg(2+) ion dislocation from EF-Tu.

It belongs to the EF-Ts family.

The protein resides in the cytoplasm. Its function is as follows. Associates with the EF-Tu.GDP complex and induces the exchange of GDP to GTP. It remains bound to the aminoacyl-tRNA.EF-Tu.GTP complex up to the GTP hydrolysis stage on the ribosome. The protein is Elongation factor Ts of Hamiltonella defensa subsp. Acyrthosiphon pisum (strain 5AT).